A 401-amino-acid polypeptide reads, in one-letter code: Imidazolonepropionase (401 aa).

Fe(3+) is bound by residues His66 and His68. Zn(2+)-binding residues include His66 and His68. Positions 75, 138, and 171 each coordinate 4-imidazolone-5-propanoate. Tyr138 is an N-formimidoyl-L-glutamate binding site. His236 lines the Fe(3+) pocket. Position 236 (His236) interacts with Zn(2+). 4-imidazolone-5-propanoate is bound at residue Gln239. Asp311 contributes to the Fe(3+) binding site. Asp311 provides a ligand contact to Zn(2+). N-formimidoyl-L-glutamate-binding residues include Asn313 and Gly315. Thr316 lines the 4-imidazolone-5-propanoate pocket.

This sequence belongs to the metallo-dependent hydrolases superfamily. HutI family. It depends on Zn(2+) as a cofactor. Fe(3+) is required as a cofactor.

The protein localises to the cytoplasm. The catalysed reaction is 4-imidazolone-5-propanoate + H2O = N-formimidoyl-L-glutamate. The protein operates within amino-acid degradation; L-histidine degradation into L-glutamate; N-formimidoyl-L-glutamate from L-histidine: step 3/3. Its function is as follows. Catalyzes the hydrolytic cleavage of the carbon-nitrogen bond in imidazolone-5-propanoate to yield N-formimidoyl-L-glutamate. It is the third step in the universal histidine degradation pathway. This chain is Imidazolonepropionase, found in Pseudomonas putida (strain ATCC 47054 / DSM 6125 / CFBP 8728 / NCIMB 11950 / KT2440).